Here is a 31-residue protein sequence, read N- to C-terminus: Photosystem II reaction center protein T (31 aa).

The chain crosses the membrane as a helical span at residues 3-23; it reads ALVYTFLLVTTLGILFFSIIF.

It belongs to the PsbT family. As to quaternary structure, PSII is composed of 1 copy each of membrane proteins PsbA, PsbB, PsbC, PsbD, PsbE, PsbF, PsbH, PsbI, PsbJ, PsbK, PsbL, PsbM, PsbT, PsbX, PsbY, PsbZ, Psb30/Ycf12, at least 3 peripheral proteins of the oxygen-evolving complex and a large number of cofactors. It forms dimeric complexes.

The protein resides in the plastid. It localises to the cyanelle thylakoid membrane. In terms of biological role, found at the monomer-monomer interface of the photosystem II (PS II) dimer, plays a role in assembly and dimerization of PSII. PSII is a light-driven water plastoquinone oxidoreductase, using light energy to abstract electrons from H(2)O, generating a proton gradient subsequently used for ATP formation. This is Photosystem II reaction center protein T from Cyanophora paradoxa.